Consider the following 471-residue polypeptide: MILKKVWGSVWNRSNSGKDLVNHQRAIDVPPLLLSSSSSLGAFDQLPMDILVQILMMMEPKDAVKLGLTCKAWKCVASGNRLWIFYLQCSQEPWDSIFFAETSLRSGYPLRMISSQSGELSFMHIYSQRAQVPGSIIIDGGSGYCKFGWSKYASPSGRSATFLEFGNIESPIYARLQQFFATIFTRMQVKPSMQPIVVSLPLCHFDDTESAKASRRQLKTAIFNVLFDMNVPAVCAVNQAVLALYAARRTSGIVVNIGFQVITILPILHGKVMRQVGVEVIGFGALKLTGFLKEKMQENNISFQSLYTVRTLKEKLCYVALDYKAELSKDTQASVEVSGEGWFTLSKERFQTGEILFQPRLAGMRAMSLHQAVSLCMDHCDAAGLTGDDSWFKTVVLTGGSACLPGLSERLERELQDHLPSSISNGIRVIPPPYGVDTSWHGAKLISNLSIFPGPWCITRKQFRRKSRLMW.

The region spanning 40-86 (LGAFDQLPMDILVQILMMMEPKDAVKLGLTCKAWKCVASGNRLWIFY) is the F-box domain. An ATP-binding site is contributed by 256-259 (NIGF).

Belongs to the actin family. Plant ARP8 subfamily. Ubiquitously expressed in all organs and cell types. Higher expression in seedlings.

The protein resides in the nucleus. It is found in the nucleolus. Its subcellular location is the cytoplasm. This is Actin-related protein 8 (ARP8) from Arabidopsis thaliana (Mouse-ear cress).